The chain runs to 454 residues: Probable glycine dehydrogenase (decarboxylating) subunit 1 (454 aa).

The protein belongs to the GcvP family. N-terminal subunit subfamily. As to quaternary structure, the glycine cleavage system is composed of four proteins: P, T, L and H. In this organism, the P 'protein' is a heterodimer of two subunits.

It carries out the reaction N(6)-[(R)-lipoyl]-L-lysyl-[glycine-cleavage complex H protein] + glycine + H(+) = N(6)-[(R)-S(8)-aminomethyldihydrolipoyl]-L-lysyl-[glycine-cleavage complex H protein] + CO2. In terms of biological role, the glycine cleavage system catalyzes the degradation of glycine. The P protein binds the alpha-amino group of glycine through its pyridoxal phosphate cofactor; CO(2) is released and the remaining methylamine moiety is then transferred to the lipoamide cofactor of the H protein. This Sorangium cellulosum (strain So ce56) (Polyangium cellulosum (strain So ce56)) protein is Probable glycine dehydrogenase (decarboxylating) subunit 1.